Here is a 511-residue protein sequence, read N- to C-terminus: Exodeoxyribonuclease 7 large subunit (511 aa).

The protein belongs to the XseA family. Heterooligomer composed of large and small subunits.

It localises to the cytoplasm. It carries out the reaction Exonucleolytic cleavage in either 5'- to 3'- or 3'- to 5'-direction to yield nucleoside 5'-phosphates.. In terms of biological role, bidirectionally degrades single-stranded DNA into large acid-insoluble oligonucleotides, which are then degraded further into small acid-soluble oligonucleotides. In Brucella suis biovar 1 (strain 1330), this protein is Exodeoxyribonuclease 7 large subunit.